We begin with the raw amino-acid sequence, 309 residues long: Elongation factor Ts (309 aa).

An involved in Mg(2+) ion dislocation from EF-Tu region spans residues 82–85 (TDFV).

Belongs to the EF-Ts family.

It is found in the cytoplasm. Its function is as follows. Associates with the EF-Tu.GDP complex and induces the exchange of GDP to GTP. It remains bound to the aminoacyl-tRNA.EF-Tu.GTP complex up to the GTP hydrolysis stage on the ribosome. This is Elongation factor Ts from Rickettsia rickettsii (strain Iowa).